The sequence spans 82 residues: MIKLRLKRFGKKREVSYRIVAMHSTTRRDGRPLEELGFYNPRTDETRLDVPAIVKRLKEGAQPTDTVRSILTKAQVFEQLKA.

The protein belongs to the bacterial ribosomal protein bS16 family.

The protein is Small ribosomal subunit protein bS16 of Synechocystis sp. (strain ATCC 27184 / PCC 6803 / Kazusa).